A 599-amino-acid polypeptide reads, in one-letter code: MSKARVLLKPSSLTTCLTRAKAFFSSVSQSRSISHQMEMGPSDSERYCYDPVLRWNPEVEDYFTKAYGPDHFARISKALTRPSSYSCIRVNTVKTTSDAVIEKLTKILNDSEEGLKLVQPDGSSPVTKCQIPGLDYVVFVNGSGPHKIEYDSGLENPPKEVLVSRKCAEAVLRGAQVYVPGVLACTAHVEKGDAVAVCVAMEQPGDEGDWSVNMTRGTTLQGLPTDPYYRERSGLYIGMGTAMLSRAGMFRVPNGIAVDLNHRVFRLPSLHNILEGEIFLQNLPSIIVAHALDPQKGERILDMCAAPGGKTTAIAILMNDEGEIVAADRSHNKVLVVQNLSAEMGFTCITTCKLDALKSVCLPTTLNESTILINGDNSSSMTSHSELSSNEEMTSVTSRRSEADKSCEKNDSTEQPNGGDNVSQAYIRKNKGRLKNGRGRTQCQGGRAGKSQGFPPNSFDRVLLDAPCSALGLRPRLFAGLETVVSLRNHGWYQRKMLDQAVQLVRVGGILVYSTCTINPSENEAVVRYALDKYRFLSLAPQHPRIGGPGLVGRCEFPDGYIEEWLKPGEEELVQKFDPSSELDTIGFFIAKFSVGPKD.

Residues 158–265 (PKEVLVSRKC…IAVDLNHRVF (108 aa)) form the PUA domain. S-adenosyl-L-methionine contacts are provided by residues 304–310 (CAAPGGK), aspartate 328, and aspartate 355. Residues 372 to 454 (LINGDNSSSM…GGRAGKSQGF (83 aa)) form a disordered region. The segment covering 378-388 (SSSMTSHSELS) has biased composition (low complexity). A compositionally biased stretch (basic and acidic residues) spans 399-412 (RRSEADKSCEKNDS). Residues 413-424 (TEQPNGGDNVSQ) show a composition bias toward polar residues. Residues 428–438 (RKNKGRLKNGR) show a composition bias toward basic residues. Aspartate 465 contributes to the S-adenosyl-L-methionine binding site. The active-site Nucleophile is the cysteine 516.

This sequence belongs to the class I-like SAM-binding methyltransferase superfamily. RsmB/NOP family.

It localises to the nucleus. The protein localises to the nucleolus. It catalyses the reaction a cytidine in rRNA + S-adenosyl-L-methionine = a 5-methylcytidine in rRNA + S-adenosyl-L-homocysteine + H(+). Functionally, involved in ribosomal large subunit assembly. S-adenosyl-L-methionine-dependent methyltransferase that may methylates the C(5) position of cytosine in rRNA. May play a role in the regulation of the cell cycle and the increased nucleolar activity that is associated with the cell proliferation. Seems involved in the regulation of cell proliferation. This is rRNA (cytosine-C(5))-methyltransferase NOP2C from Arabidopsis thaliana (Mouse-ear cress).